A 372-amino-acid polypeptide reads, in one-letter code: Glutamate 5-kinase (372 aa).

Lys-14 provides a ligand contact to ATP. Ser-54, Asp-141, and Asn-153 together coordinate substrate. Residue 173-174 (TD) coordinates ATP. Residues 280–358 (RGTVVIDDGA…SQIESLLGYS (79 aa)) enclose the PUA domain.

It belongs to the glutamate 5-kinase family.

It is found in the cytoplasm. It carries out the reaction L-glutamate + ATP = L-glutamyl 5-phosphate + ADP. It participates in amino-acid biosynthesis; L-proline biosynthesis; L-glutamate 5-semialdehyde from L-glutamate: step 1/2. Catalyzes the transfer of a phosphate group to glutamate to form L-glutamate 5-phosphate. The sequence is that of Glutamate 5-kinase from Methylibium petroleiphilum (strain ATCC BAA-1232 / LMG 22953 / PM1).